We begin with the raw amino-acid sequence, 481 residues long: MFS transporter eqxG (481 aa).

Over residues 1–13 the composition is skewed to low complexity; it reads MATTDPAIAAPDD. The disordered stretch occupies residues 1–58; the sequence is MATTDPAIAAPDDSQLEAGRENIRANVGDALEKPSSSTGTMVDEPTDPNVVDWDGPHD. A glycan (N-linked (GlcNAc...) asparagine) is linked at Asn64. Residues 72–92 form a helical membrane-spanning segment; that stretch reads LHLVIVSLFTLAANLAATMFA. N-linked (GlcNAc...) asparagine glycosylation occurs at Asn106. The next 10 membrane-spanning stretches (helical) occupy residues 111 to 131, 146 to 166, 169 to 189, 201 to 221, 276 to 296, 315 to 335, 353 to 373, 380 to 400, 403 to 423, and 439 to 459; these read AMTV…LAPL, FVYV…MFLV, IICG…VADL, LFTV…TVIF, PIVL…FLLF, GLAY…FSVL, LILM…YGWT, WIVP…VVIP, IYLV…ANLL, and LYVS…CLLF.

The protein belongs to the major facilitator superfamily.

It is found in the cell membrane. Efflux pump that might be required for efficient secretion of equisetin or other secondary metabolies produced by the equisetin gene cluster. This chain is MFS transporter eqxG, found in Fusarium heterosporum.